Reading from the N-terminus, the 121-residue chain is uncharacterized protein (121 aa).

To M.jannaschii MJ0989.

This is an uncharacterized protein from Methanopyrus kandleri (strain AV19 / DSM 6324 / JCM 9639 / NBRC 100938).